We begin with the raw amino-acid sequence, 312 residues long: DNA-directed RNA polymerase subunit alpha (312 aa).

The interval 1-229 (MLQYQIDRIE…ELFQPLATVT (229 aa)) is alpha N-terminal domain (alpha-NTD). Residues 246–312 (IPLEELNLSV…ISIPQSRTSA (67 aa)) form an alpha C-terminal domain (alpha-CTD) region.

It belongs to the RNA polymerase alpha chain family. In terms of assembly, in cyanobacteria the RNAP catalytic core is composed of 2 alpha, 1 beta, 1 beta', 1 gamma and 1 omega subunit. When a sigma factor is associated with the core the holoenzyme is formed, which can initiate transcription.

The catalysed reaction is RNA(n) + a ribonucleoside 5'-triphosphate = RNA(n+1) + diphosphate. In terms of biological role, DNA-dependent RNA polymerase catalyzes the transcription of DNA into RNA using the four ribonucleoside triphosphates as substrates. The protein is DNA-directed RNA polymerase subunit alpha of Parasynechococcus marenigrum (strain WH8102).